We begin with the raw amino-acid sequence, 280 residues long: 4-diphosphocytidyl-2-C-methyl-D-erythritol kinase (280 aa).

Residue Lys-9 is part of the active site. 93-103 contributes to the ATP binding site; that stretch reads PVAAGLGGGSS. Asp-135 is an active-site residue.

This sequence belongs to the GHMP kinase family. IspE subfamily.

It catalyses the reaction 4-CDP-2-C-methyl-D-erythritol + ATP = 4-CDP-2-C-methyl-D-erythritol 2-phosphate + ADP + H(+). It functions in the pathway isoprenoid biosynthesis; isopentenyl diphosphate biosynthesis via DXP pathway; isopentenyl diphosphate from 1-deoxy-D-xylulose 5-phosphate: step 3/6. Catalyzes the phosphorylation of the position 2 hydroxy group of 4-diphosphocytidyl-2C-methyl-D-erythritol. The polypeptide is 4-diphosphocytidyl-2-C-methyl-D-erythritol kinase (Syntrophotalea carbinolica (strain DSM 2380 / NBRC 103641 / GraBd1) (Pelobacter carbinolicus)).